A 383-amino-acid polypeptide reads, in one-letter code: Sterol 24-C-methyltransferase ERG6 (383 aa).

Residue serine 2 is modified to N-acetylserine. Serine 99 bears the Phosphoserine mark.

It belongs to the class I-like SAM-binding methyltransferase superfamily. Erg6/SMT family. Interacts with ERG28.

It is found in the microsome. The protein resides in the mitochondrion. It carries out the reaction zymosterol + S-adenosyl-L-methionine = fecosterol + S-adenosyl-L-homocysteine + H(+). It participates in steroid metabolism; ergosterol biosynthesis; ergosterol from zymosterol: step 1/5. In terms of biological role, sterol 24-C-methyltransferase; part of the third module of ergosterol biosynthesis pathway that includes the late steps of the pathway. ERG6 catalyzes the methyl transfer from S-adenosyl-methionine to the C-24 of zymosterol to form fecosterol. The third module or late pathway involves the ergosterol synthesis itself through consecutive reactions that mainly occur in the endoplasmic reticulum (ER) membrane. Firstly, the squalene synthase ERG9 catalyzes the condensation of 2 farnesyl pyrophosphate moieties to form squalene, which is the precursor of all steroids. Squalene synthase is crucial for balancing the incorporation of farnesyl diphosphate (FPP) into sterol and nonsterol isoprene synthesis. Secondly, the squalene epoxidase ERG1 catalyzes the stereospecific oxidation of squalene to (S)-2,3-epoxysqualene, which is considered to be a rate-limiting enzyme in steroid biosynthesis. Then, the lanosterol synthase ERG7 catalyzes the cyclization of (S)-2,3 oxidosqualene to lanosterol, a reaction that forms the sterol core. In the next steps, lanosterol is transformed to zymosterol through a complex process involving various demethylation, reduction and desaturation reactions. The lanosterol 14-alpha-demethylase ERG11 (also known as CYP51) catalyzes C14-demethylation of lanosterol to produce 4,4'-dimethyl cholesta-8,14,24-triene-3-beta-ol, which is critical for ergosterol biosynthesis. The C-14 reductase ERG24 reduces the C14=C15 double bond of 4,4-dimethyl-cholesta-8,14,24-trienol to produce 4,4-dimethyl-cholesta-8,24-dienol. 4,4-dimethyl-cholesta-8,24-dienol is substrate of the C-4 demethylation complex ERG25-ERG26-ERG27 in which ERG25 catalyzes the three-step monooxygenation required for the demethylation of 4,4-dimethyl and 4alpha-methylsterols, ERG26 catalyzes the oxidative decarboxylation that results in a reduction of the 3-beta-hydroxy group at the C-3 carbon to an oxo group, and ERG27 is responsible for the reduction of the keto group on the C-3. ERG28 has a role as a scaffold to help anchor ERG25, ERG26 and ERG27 to the endoplasmic reticulum and ERG29 regulates the activity of the iron-containing C4-methylsterol oxidase ERG25. Then, the sterol 24-C-methyltransferase ERG6 catalyzes the methyl transfer from S-adenosyl-methionine to the C-24 of zymosterol to form fecosterol. The C-8 sterol isomerase ERG2 catalyzes the reaction which results in unsaturation at C-7 in the B ring of sterols and thus converts fecosterol to episterol. The sterol-C5-desaturase ERG3 then catalyzes the introduction of a C-5 double bond in the B ring to produce 5-dehydroepisterol. The C-22 sterol desaturase ERG5 further converts 5-dehydroepisterol into ergosta-5,7,22,24(28)-tetraen-3beta-ol by forming the C-22(23) double bond in the sterol side chain. Finally, ergosta-5,7,22,24(28)-tetraen-3beta-ol is substrate of the C-24(28) sterol reductase ERG4 to produce ergosterol. This Saccharomyces cerevisiae (strain ATCC 204508 / S288c) (Baker's yeast) protein is Sterol 24-C-methyltransferase ERG6.